The primary structure comprises 119 residues: Large ribosomal subunit protein bL20 (119 aa).

It belongs to the bacterial ribosomal protein bL20 family.

Its function is as follows. Binds directly to 23S ribosomal RNA and is necessary for the in vitro assembly process of the 50S ribosomal subunit. It is not involved in the protein synthesizing functions of that subunit. The sequence is that of Large ribosomal subunit protein bL20 from Burkholderia ambifaria (strain MC40-6).